The primary structure comprises 217 residues: C-type lectin domain family 2 member I (217 aa).

Topologically, residues 1–53 are cytoplasmic; the sequence is MPDCLETGEKLFVHNMNAQCVQKPEEGNGPLGTGGKIVQGKCFRIISTVSPVK. A helical; Signal-anchor for type II membrane protein transmembrane segment spans residues 54–74; that stretch reads LYCCYGVIMVLTVAVIALSVA. Topologically, residues 75-217 are extracellular; it reads LSTKKTEQII…YNLHCQTPPV (143 aa). The cysteines at positions 92 and 103 are disulfide-linked. Residues 99 to 203 form the C-type lectin domain; the sequence is VGNKCFYFSG…SYINRMWICS (105 aa). Asn-112 carries an N-linked (GlcNAc...) asparagine glycan. Cysteines 120 and 202 form a disulfide.

Detected in osteoblasts, growth plate chondrocytes and skeletal muscle overlying the bone (at protein level). Detected in spleen, B-cells, dendritic cells, thymus, and in IL2-activated natural killer cells.

Its subcellular location is the cell membrane. Its function is as follows. Inhibits osteoclast formation. Receptor for KLRB1F. Enhances T-cell activation. Plays a role in splenocyte activation, T-cell responses and IL-2 production. This Mus musculus (Mouse) protein is C-type lectin domain family 2 member I (Clec2i).